Reading from the N-terminus, the 156-residue chain is Small ribosomal subunit protein uS7 (156 aa).

The protein belongs to the universal ribosomal protein uS7 family. Part of the 30S ribosomal subunit. Contacts proteins S9 and S11.

One of the primary rRNA binding proteins, it binds directly to 16S rRNA where it nucleates assembly of the head domain of the 30S subunit. Is located at the subunit interface close to the decoding center, probably blocks exit of the E-site tRNA. The sequence is that of Small ribosomal subunit protein uS7 from Nitratidesulfovibrio vulgaris (strain DSM 19637 / Miyazaki F) (Desulfovibrio vulgaris).